Here is a 37-residue protein sequence, read N- to C-terminus: Large ribosomal subunit protein bL36 (37 aa).

Belongs to the bacterial ribosomal protein bL36 family.

In Thermosynechococcus vestitus (strain NIES-2133 / IAM M-273 / BP-1), this protein is Large ribosomal subunit protein bL36.